A 358-amino-acid polypeptide reads, in one-letter code: Photosystem II protein D1 2 (358 aa).

A run of 3 helical transmembrane segments spans residues 28-45 (YVGW…AATI), 117-132 (HFLI…QWEL), and 141-155 (WICV…AAMV). H117 is a binding site for chlorophyll a. Y125 contacts pheophytin a. [CaMn4O5] cluster-binding residues include D169 and E188. A helical membrane pass occupies residues 196 to 217 (FHMLGVAGVFGGSLFSAMHGSL). Residue H197 coordinates chlorophyll a. Residues H214 and 263–264 (SF) contribute to the a quinone site. A Fe cation-binding site is contributed by H214. H271 contacts Fe cation. Residues 273–287 (FLAAWPVVGIWFTSM) form a helical membrane-spanning segment. [CaMn4O5] cluster is bound by residues H331, E332, D341, and A343. A propeptide spanning residues 344-358 (TTESAPVALQAPAVG) is cleaved from the precursor.

This sequence belongs to the reaction center PufL/M/PsbA/D family. PSII is composed of 1 copy each of membrane proteins PsbA, PsbB, PsbC, PsbD, PsbE, PsbF, PsbH, PsbI, PsbJ, PsbK, PsbL, PsbM, PsbT, PsbX, PsbY, PsbZ, Psb30/Ycf12, peripheral proteins PsbO, CyanoQ (PsbQ), PsbU, PsbV and a large number of cofactors. It forms dimeric complexes. It depends on The D1/D2 heterodimer binds P680, chlorophylls that are the primary electron donor of PSII, and subsequent electron acceptors. It shares a non-heme iron and each subunit binds pheophytin, quinone, additional chlorophylls, carotenoids and lipids. D1 provides most of the ligands for the Mn4-Ca-O5 cluster of the oxygen-evolving complex (OEC). There is also a Cl(-1) ion associated with D1 and D2, which is required for oxygen evolution. The PSII complex binds additional chlorophylls, carotenoids and specific lipids. as a cofactor. Tyr-160 forms a radical intermediate that is referred to as redox-active TyrZ, YZ or Y-Z. In terms of processing, C-terminally processed by CtpA; processing is essential to allow assembly of the oxygen-evolving complex and thus photosynthetic growth.

The protein localises to the cellular thylakoid membrane. It carries out the reaction 2 a plastoquinone + 4 hnu + 2 H2O = 2 a plastoquinol + O2. Its function is as follows. Photosystem II (PSII) is a light-driven water:plastoquinone oxidoreductase that uses light energy to abstract electrons from H(2)O, generating O(2) and a proton gradient subsequently used for ATP formation. It consists of a core antenna complex that captures photons, and an electron transfer chain that converts photonic excitation into a charge separation. The D1/D2 (PsbA/PsbD) reaction center heterodimer binds P680, the primary electron donor of PSII as well as several subsequent electron acceptors. The chain is Photosystem II protein D1 2 from Synechococcus sp. (strain RCC307).